Here is a 452-residue protein sequence, read N- to C-terminus: Probable V-type proton ATPase subunit H (452 aa).

This sequence belongs to the V-ATPase H subunit family. As to quaternary structure, V-ATPase is a heteromultimeric enzyme composed of a peripheral catalytic V1 complex (components A to H) attached to an integral membrane V0 proton pore complex (components: a, c, c', c'' and d).

In terms of biological role, subunit of the peripheral V1 complex of vacuolar ATPase. Subunit H activates the ATPase activity of the enzyme and couples ATPase activity to proton flow. Vacuolar ATPase is responsible for acidifying a variety of intracellular compartments in eukaryotic cells, thus providing most of the energy required for transport processes in the vacuolar system. The polypeptide is Probable V-type proton ATPase subunit H (Oryza sativa subsp. japonica (Rice)).